The following is a 365-amino-acid chain: NAD(P)H-quinone oxidoreductase subunit 1, chloroplastic (365 aa).

Helical transmembrane passes span Ile29–Ile49, Ile106–Leu126, Leu129–Met149, Tyr250–Ser270, Ile302–Ile322, and Leu338–Thr358.

It belongs to the complex I subunit 1 family. In terms of assembly, NDH is composed of at least 16 different subunits, 5 of which are encoded in the nucleus.

The protein resides in the plastid. Its subcellular location is the chloroplast thylakoid membrane. It catalyses the reaction a plastoquinone + NADH + (n+1) H(+)(in) = a plastoquinol + NAD(+) + n H(+)(out). The enzyme catalyses a plastoquinone + NADPH + (n+1) H(+)(in) = a plastoquinol + NADP(+) + n H(+)(out). Functionally, NDH shuttles electrons from NAD(P)H:plastoquinone, via FMN and iron-sulfur (Fe-S) centers, to quinones in the photosynthetic chain and possibly in a chloroplast respiratory chain. The immediate electron acceptor for the enzyme in this species is believed to be plastoquinone. Couples the redox reaction to proton translocation, and thus conserves the redox energy in a proton gradient. This is NAD(P)H-quinone oxidoreductase subunit 1, chloroplastic from Acorus calamus (Sweet flag).